The sequence spans 23 residues: Alyteserin-1d (23 aa).

The residue at position 23 (N23) is an Asparagine amide.

As to expression, expressed by the skin glands.

Its subcellular location is the secreted. The protein localises to the target cell membrane. In terms of biological role, antibacterial peptide with amphipathic alpha-helical structure. Shows selective growth inhibitory activity against the Gram-negative bacteria E.coli (MIC=25 uM) Has a weak hemolytic activity against human erythrocytes (LC(50)&gt;100 uM). Is very weakly active against S.aureus (MIC=200 uM). In Alytes obstetricans (Common midwife toad), this protein is Alyteserin-1d.